The chain runs to 101 residues: Pro-corazonin (101 aa).

The N-terminal stretch at 1 to 16 is a signal peptide; the sequence is MLVLFVLSLVVSCALC. Asparagine amide is present on N27. Residues 31-101 constitute a propeptide that is removed on maturation; the sequence is SNFPAEISAL…REKAPNNDNY (71 aa).

The protein belongs to the corazonin family. As to expression, expressed in central brain and the retrocerebral complex but not in antennal lobes, optic lobes or in gnathal, thoracic and abdominal ganglia (at protein level).

The protein localises to the secreted. Cardioactive peptide. Corazonin is probably involved in the physiological regulation of the heart beat. In Camponotus floridanus (Florida carpenter ant), this protein is Pro-corazonin.